Here is a 442-residue protein sequence, read N- to C-terminus: QWRF motif-containing protein 6 (442 aa).

Disordered stretches follow at residues 1-144 (MEAK…LSQQ) and 221-240 (FSRL…ADTK). The span at 57–66 (KQHHLQHHQI) shows a compositional bias: basic residues. Residues 80–89 (KMADGDENRS) are compositionally biased toward basic and acidic residues. A QWRF motif motif is present at residues 264-267 (QWRF).

The protein belongs to the QWRF family.

This is QWRF motif-containing protein 6 (QWRF6) from Arabidopsis thaliana (Mouse-ear cress).